We begin with the raw amino-acid sequence, 204 residues long: Putative AgrB-like protein (204 aa).

5 helical membrane passes run 52–74 (YGIA…YLWL), 87–107 (LNCT…FQNI), 111–131 (NWIV…FAPA), 151–168 (AMIG…IPFA), and 173–190 (LIMV…PLTY).

This sequence belongs to the AgrB family.

The protein resides in the cell membrane. May be involved in the proteolytic processing of a quorum sensing system signal molecule precursor. In Listeria monocytogenes serovar 1/2a (strain ATCC BAA-679 / EGD-e), this protein is Putative AgrB-like protein.